Consider the following 168-residue polypeptide: 2-C-methyl-D-erythritol 2,4-cyclodiphosphate synthase (168 aa).

The a divalent metal cation site is built by aspartate 15 and histidine 17. 4-CDP-2-C-methyl-D-erythritol 2-phosphate is bound by residues 15-17 (DVH) and 45-46 (HS). Residue histidine 53 participates in a divalent metal cation binding. 4-CDP-2-C-methyl-D-erythritol 2-phosphate contacts are provided by residues 72–76 (FPNSD), phenylalanine 150, and arginine 153.

Belongs to the IspF family. Homotrimer. It depends on a divalent metal cation as a cofactor.

The catalysed reaction is 4-CDP-2-C-methyl-D-erythritol 2-phosphate = 2-C-methyl-D-erythritol 2,4-cyclic diphosphate + CMP. It participates in isoprenoid biosynthesis; isopentenyl diphosphate biosynthesis via DXP pathway; isopentenyl diphosphate from 1-deoxy-D-xylulose 5-phosphate: step 4/6. Involved in the biosynthesis of isopentenyl diphosphate (IPP) and dimethylallyl diphosphate (DMAPP), two major building blocks of isoprenoid compounds. Catalyzes the conversion of 4-diphosphocytidyl-2-C-methyl-D-erythritol 2-phosphate (CDP-ME2P) to 2-C-methyl-D-erythritol 2,4-cyclodiphosphate (ME-CPP) with a corresponding release of cytidine 5-monophosphate (CMP). The polypeptide is 2-C-methyl-D-erythritol 2,4-cyclodiphosphate synthase (Anaplasma phagocytophilum (strain HZ)).